Consider the following 118-residue polypeptide: Hisactophilin-1 (118 aa).

A lipid anchor (N-myristoyl glycine) is attached at Gly2. The interval 8–109 (SHHGHFLSAE…HVSTKEHHDH (102 aa)) is contains several HHXH repeats. 2 tandem repeats follow at residues 34–46 (FHVE…VALK) and 74–86 (FHLE…VSIK). Residues 34–86 (FHVENHGGKVALKTHCGKYLSIGDHKQVYLSHHLHGDHSLFHLEHHGGKVSIK) form a 2 X 13 AA approximate repeats region.

Belongs to the hisactophilin family. In terms of assembly, homodimer or heterodimer of hatA and hatB, linked by a disulfide bond. Post-translationally, phosphorylated.

The protein resides in the cytoplasm. The protein localises to the cell membrane. May act as an intracellular pH sensor that links chemotactic signals to responses in the microfilament system of the cells by nucleating actin polymerization or stabilizing the filaments. This is Hisactophilin-1 (hatA) from Dictyostelium discoideum (Social amoeba).